The chain runs to 465 residues: Cysteine--tRNA ligase (465 aa).

Cys27 serves as a coordination point for Zn(2+). The 'HIGH' region signature appears at 29-39 (PTVYDFIHIGN). Cys207, His232, and Glu236 together coordinate Zn(2+). Positions 264-268 (KMSKS) match the 'KMSKS' region motif. Residue Lys267 coordinates ATP.

This sequence belongs to the class-I aminoacyl-tRNA synthetase family. Monomer. The cofactor is Zn(2+).

The protein resides in the cytoplasm. The catalysed reaction is tRNA(Cys) + L-cysteine + ATP = L-cysteinyl-tRNA(Cys) + AMP + diphosphate. In Caldicellulosiruptor saccharolyticus (strain ATCC 43494 / DSM 8903 / Tp8T 6331), this protein is Cysteine--tRNA ligase.